The sequence spans 278 residues: MVSKVKIGIIGGSGLDDSQIIENRTERVVNTHFGIPSDVLIEGKIAGVDCVLLARHGRNHSIMPSNVNYRANIWALKTLGCTHVIVSTATGSLKEEIHPGDIVIPDNFIDRTTKRVQTFYDGNELLSGVCHIPMEPAFCNRTRDVLIETARGIGLGVHEKGTVVTIEGPRFSSKAESNLFRQWGADLVNMTLVPEVVLAKEAGLCYAAIAMATDYDCWREAGEDVNVADVLATFKKNVTKVTDLIINAIPKVAALDWSDTIEELGKTVNTSIMLPHSN.

Phosphate-binding positions include Ser13, 55–56, and 88–89; these read RH and TA. Met190 serves as a coordination point for substrate. Thr191 is a binding site for phosphate. 214–216 serves as a coordination point for substrate; the sequence is DYD.

The protein belongs to the PNP/MTAP phosphorylase family. MTAP subfamily. In terms of assembly, homotrimer.

The protein localises to the cytoplasm. The protein resides in the nucleus. The catalysed reaction is S-methyl-5'-thioadenosine + phosphate = 5-(methylsulfanyl)-alpha-D-ribose 1-phosphate + adenine. Its pathway is amino-acid biosynthesis; L-methionine biosynthesis via salvage pathway; S-methyl-5-thio-alpha-D-ribose 1-phosphate from S-methyl-5'-thioadenosine (phosphorylase route): step 1/1. Catalyzes the reversible phosphorylation of S-methyl-5'-thioadenosine (MTA) to adenine and 5-methylthioribose-1-phosphate. Involved in the breakdown of MTA, a major by-product of polyamine biosynthesis. Responsible for the first step in the methionine salvage pathway after MTA has been generated from S-adenosylmethionine. Has broad substrate specificity with 6-aminopurine nucleosides as preferred substrates. The polypeptide is S-methyl-5'-thioadenosine phosphorylase (Anopheles gambiae (African malaria mosquito)).